The following is a 341-amino-acid chain: Probable galacturonosyltransferase-like 2 (341 aa).

Residues 1 to 4 are Cytoplasmic-facing; it reads MHSK. A helical; Signal-anchor for type II membrane protein transmembrane segment spans residues 5–22; the sequence is FILYLSILAVFTVSFAGG. At 23-341 the chain is on the lumenal side; that stretch reads ERFKEAPKFF…LESRFDLIES (319 aa). N-linked (GlcNAc...) asparagine glycosylation is present at N190.

It belongs to the glycosyltransferase 8 family.

Its subcellular location is the golgi apparatus membrane. It participates in glycan metabolism; pectin biosynthesis. Its function is as follows. May be involved in pectin and/or xylans biosynthesis in cell walls. This is Probable galacturonosyltransferase-like 2 (GATL2) from Arabidopsis thaliana (Mouse-ear cress).